A 364-amino-acid chain; its full sequence is MRLFHFLKFLTINNFSRYCLKIVKVHIIWITIICIIYFNWRFKKLDFMAIPYPPAVIKFNTSAKYLSSNLASSSQLGNNIFEIASLYGLSKHLNRTPLFFIENGYHKKMLDNLRKTMPRLMEKFRILNGSVPRSISETKFQRACCLHKSPWSLEKNRDEYLHLSGKYYQSWKYFPNMRNELIEFLNPTSIQIFGNLPISDDQNHVTCVHSRRGDFVEYLFYASDPKFMKNAVTFLNENEKVGSRNRKIVLFGDDLNFLETYFSDAVLSTDVGKNAEYYISQNPPIDDFLYSKNNCDVVLITAPRSTFGWWIGYFSKGNKVYYLDIKYTGDHIFESGGLIASDFYPSHWTPLKFASANSFTVVRS.

At Met-1–Cys-19 the chain is on the cytoplasmic side. Residues Leu-20–Phe-42 traverse the membrane as a helical; Signal-anchor for type II membrane protein segment. Topologically, residues Lys-43–Ser-364 are lumenal. 2 N-linked (GlcNAc...) asparagine glycosylation sites follow: Asn-60 and Asn-128.

This sequence belongs to the glycosyltransferase 11 family.

It localises to the golgi apparatus. Its subcellular location is the golgi stack membrane. In terms of biological role, mediates the transfer of fucose to the terminal galactose on glycan chains of cell surface glycoproteins and glycolipids. Required for axon regeneration after injury. This is Putative galactoside 2-alpha-L-fucosyltransferase svh-11 from Caenorhabditis elegans.